The following is a 647-amino-acid chain: Threonine--tRNA ligase (647 aa).

The 61-residue stretch at 1 to 61 (MINITFPDGA…TEDGSIEIVT (61 aa)) folds into the TGS domain. The interval 242-540 (DHRKLGKELD…LIENYKGAFP (299 aa)) is catalytic. Zn(2+)-binding residues include C336, H387, and H517.

It belongs to the class-II aminoacyl-tRNA synthetase family. In terms of assembly, homodimer. Requires Zn(2+) as cofactor.

It is found in the cytoplasm. It carries out the reaction tRNA(Thr) + L-threonine + ATP = L-threonyl-tRNA(Thr) + AMP + diphosphate + H(+). Its function is as follows. Catalyzes the attachment of threonine to tRNA(Thr) in a two-step reaction: L-threonine is first activated by ATP to form Thr-AMP and then transferred to the acceptor end of tRNA(Thr). Also edits incorrectly charged L-seryl-tRNA(Thr). The protein is Threonine--tRNA ligase of Streptococcus pneumoniae serotype 2 (strain D39 / NCTC 7466).